Reading from the N-terminus, the 382-residue chain is MQQRQSILWGAVATLMWAGLAHAGEASPVDPLRPVVDASIQPLLKEHRIPGMAVAVLKDGKAHYFNYGVANRESGAGVSEQTLFEIGSVSKTLTATLGAYAVVKGAMQLDDKASRHAPWLKGSAFDSITMGELATYSAGGLPLQFPEEVDSSEKMRAYYRQWAPVYSPGSHRQYSNPSIGLFGHLAASSLKQPFAPLMEQTLLPGLGMHHTYVNVPKQAMASYAYGYSKEDKPIRVNPGMLADEAYGIKTSSADLLRFVKANIGGVDDKALQQAISLTHQGHYSVGGMTQGLGWESYAYPVTEQTLLAGNSAKVILEANPTAAPRESGSQVLFNKTGSTNGFGAYVAFVPARGIGIVMLANRNYPNEARIKAAHAILAQLAG.

The N-terminal stretch at 1–23 (MQQRQSILWGAVATLMWAGLAHA) is a signal peptide. The active-site Acyl-ester intermediate is the Ser88. The a beta-lactam site is built by Ser88, Gln144, Tyr174, Asn176, and Asn363.

It belongs to the class-C beta-lactamase family.

The catalysed reaction is a beta-lactam + H2O = a substituted beta-amino acid. Inhibited by the beta-lactamase-blocking agent sulbactam. Its function is as follows. Class C beta-lactamase which confers resistance to penicillins and cephalosporins. Has benzylpenicillin- and cefalotin-hydrolyzing activities. Has weak cefuroxime, cefotaxime, cefoxitin, imipenem and oxacillin-hydrolyzing activities. This is Beta-lactamase CMY-1 from Klebsiella pneumoniae.